The primary structure comprises 185 residues: Ribosome-recycling factor (185 aa).

Belongs to the RRF family.

The protein localises to the cytoplasm. In terms of biological role, responsible for the release of ribosomes from messenger RNA at the termination of protein biosynthesis. May increase the efficiency of translation by recycling ribosomes from one round of translation to another. In Campylobacter concisus (strain 13826), this protein is Ribosome-recycling factor.